A 222-amino-acid polypeptide reads, in one-letter code: 2-C-methyl-D-erythritol 4-phosphate cytidylyltransferase (222 aa).

Belongs to the IspD/TarI cytidylyltransferase family. IspD subfamily.

The catalysed reaction is 2-C-methyl-D-erythritol 4-phosphate + CTP + H(+) = 4-CDP-2-C-methyl-D-erythritol + diphosphate. The protein operates within isoprenoid biosynthesis; isopentenyl diphosphate biosynthesis via DXP pathway; isopentenyl diphosphate from 1-deoxy-D-xylulose 5-phosphate: step 2/6. Its function is as follows. Catalyzes the formation of 4-diphosphocytidyl-2-C-methyl-D-erythritol from CTP and 2-C-methyl-D-erythritol 4-phosphate (MEP). The polypeptide is 2-C-methyl-D-erythritol 4-phosphate cytidylyltransferase (Thermotoga sp. (strain RQ2)).